We begin with the raw amino-acid sequence, 302 residues long: uncharacterized protein (302 aa).

The next 9 helical transmembrane spans lie at 1-21 (MSWI…LGVI), 33-53 (SLLF…YIYY), 67-87 (FLIE…IFQF), 101-121 (FGII…IILI), 124-144 (FSWL…KTFY), 185-205 (YVTP…VFAI), 220-240 (IIYT…FCLA), 253-273 (LALI…IAIP), and 274-294 (AYIS…ASVI).

The protein belongs to the TerC family.

It is found in the cell membrane. This is an uncharacterized protein from Rickettsia bellii (strain RML369-C).